The sequence spans 506 residues: Probable cytochrome P450 309a1 (506 aa).

A phosphothreonine mark is found at T75, T78, and T81. C452 contributes to the heme binding site.

Belongs to the cytochrome P450 family. The cofactor is heme.

Its subcellular location is the endoplasmic reticulum membrane. It localises to the microsome membrane. In terms of biological role, may be involved in the metabolism of insect hormones and in the breakdown of synthetic insecticides. The protein is Probable cytochrome P450 309a1 (Cyp309a1) of Drosophila melanogaster (Fruit fly).